Reading from the N-terminus, the 37-residue chain is Cytochrome b6-f complex subunit 5 (37 aa).

The helical transmembrane segment at 5–25 threads the bilayer; that stretch reads FLFGIVLGLIPVTLAGLFVTA.

This sequence belongs to the PetG family. In terms of assembly, the 4 large subunits of the cytochrome b6-f complex are cytochrome b6, subunit IV (17 kDa polypeptide, PetD), cytochrome f and the Rieske protein, while the 4 small subunits are PetG, PetL, PetM and PetN. The complex functions as a dimer.

The protein localises to the plastid. It is found in the chloroplast thylakoid membrane. Component of the cytochrome b6-f complex, which mediates electron transfer between photosystem II (PSII) and photosystem I (PSI), cyclic electron flow around PSI, and state transitions. PetG is required for either the stability or assembly of the cytochrome b6-f complex. The sequence is that of Cytochrome b6-f complex subunit 5 from Daucus carota (Wild carrot).